Here is a 354-residue protein sequence, read N- to C-terminus: Protein RecA (354 aa).

67–74 lines the ATP pocket; the sequence is GPESSGKT.

Belongs to the RecA family.

Its subcellular location is the cytoplasm. Functionally, can catalyze the hydrolysis of ATP in the presence of single-stranded DNA, the ATP-dependent uptake of single-stranded DNA by duplex DNA, and the ATP-dependent hybridization of homologous single-stranded DNAs. It interacts with LexA causing its activation and leading to its autocatalytic cleavage. The protein is Protein RecA of Hamiltonella defensa subsp. Acyrthosiphon pisum (strain 5AT).